A 303-amino-acid chain; its full sequence is Probable alpha-L-glutamate ligase 1 (303 aa).

In terms of domain architecture, ATP-grasp spans 104–287; that stretch reads LQLLSRKGVG…IAGLIYSFIE (184 aa). Residues Lys-141, 178–179, Asp-187, and 211–213 contribute to the ATP site; these read EF and RSN. Mg(2+)-binding residues include Asp-248, Glu-260, and Asn-262. Mn(2+)-binding residues include Asp-248, Glu-260, and Asn-262.

It belongs to the RimK family. Mg(2+) serves as cofactor. It depends on Mn(2+) as a cofactor.

The sequence is that of Probable alpha-L-glutamate ligase 1 from Hahella chejuensis (strain KCTC 2396).